Consider the following 123-residue polypeptide: Small ribosomal subunit protein uS12 (123 aa).

The disordered stretch occupies residues Met1–Thr21. Over residues Arg9–Lys20 the composition is skewed to basic residues. At Asp89 the chain carries 3-methylthioaspartic acid.

This sequence belongs to the universal ribosomal protein uS12 family. In terms of assembly, part of the 30S ribosomal subunit. Contacts proteins S8 and S17. May interact with IF1 in the 30S initiation complex.

Functionally, with S4 and S5 plays an important role in translational accuracy. Its function is as follows. Interacts with and stabilizes bases of the 16S rRNA that are involved in tRNA selection in the A site and with the mRNA backbone. Located at the interface of the 30S and 50S subunits, it traverses the body of the 30S subunit contacting proteins on the other side and probably holding the rRNA structure together. The combined cluster of proteins S8, S12 and S17 appears to hold together the shoulder and platform of the 30S subunit. The chain is Small ribosomal subunit protein uS12 from Bifidobacterium longum subsp. infantis (strain ATCC 15697 / DSM 20088 / JCM 1222 / NCTC 11817 / S12).